Consider the following 612-residue polypeptide: Cytokine-like nuclear factor N-PAC (612 aa).

In terms of domain architecture, PWWP spans 22-81 (PKDLIWAKMKGFTPWPGMIVEPPLDLLTQQRRANTKCVFFFGSRNFAWIEENNIKPFEGP). The tract at residues 168 to 270 (AVEGENNADS…GASSSSPTAR (103 aa)) is disordered. Low complexity-rich tracts occupy residues 177 to 193 (SSASPTVTAATPATAKS) and 201 to 220 (AKPVSAVSATKAAKASTTKS). Polar residues predominate over residues 228–240 (AHQTPTGANTSGL). The interaction with histone H3 stretch occupies residues 276 to 279 (DDLL). Residues 319–612 (RDIVPSELTF…SSAVFVRSRF (294 aa)) are dehydrogenase domain. NAD(+) is bound by residues 329–343 (GFLGLGMMGSTIVKD), threonine 421, and arginine 564.

Belongs to the HIBADH-related family. NP60 subfamily. Binds to mononucleosomes. Interacts with male-specific lethal (MSL) histone acetyltransferase complex at least composed of mof, msl-1, msl-2 and msl-3.

It localises to the chromosome. Nucleosome-destabilizing factor that is recruited to genes during transcriptional activation and colocalizes with a subset of trimethylated 'Lys-36' histone H3 (H3K36me3)-enriched regions. Binds DNA (in vitro). Facilitates Pol II transcription through nucleosomes. Facilitates male-specific lethal (MSL) histone acetyltransferase complex targeting to active genes on the X chromosome. Stimulates the acetylation of 'Lys-56' of nucleosomal histone H3 (H3K56ac) by nej. This Drosophila pseudoobscura pseudoobscura (Fruit fly) protein is Cytokine-like nuclear factor N-PAC.